A 180-amino-acid polypeptide reads, in one-letter code: Crossover junction endodeoxyribonuclease RuvC (180 aa).

Residues D7, E66, and D138 contribute to the active site. Mg(2+) contacts are provided by D7, E66, and D138.

Belongs to the RuvC family. In terms of assembly, homodimer which binds Holliday junction (HJ) DNA. The HJ becomes 2-fold symmetrical on binding to RuvC with unstacked arms; it has a different conformation from HJ DNA in complex with RuvA. In the full resolvosome a probable DNA-RuvA(4)-RuvB(12)-RuvC(2) complex forms which resolves the HJ. Requires Mg(2+) as cofactor.

Its subcellular location is the cytoplasm. The catalysed reaction is Endonucleolytic cleavage at a junction such as a reciprocal single-stranded crossover between two homologous DNA duplexes (Holliday junction).. In terms of biological role, the RuvA-RuvB-RuvC complex processes Holliday junction (HJ) DNA during genetic recombination and DNA repair. Endonuclease that resolves HJ intermediates. Cleaves cruciform DNA by making single-stranded nicks across the HJ at symmetrical positions within the homologous arms, yielding a 5'-phosphate and a 3'-hydroxyl group; requires a central core of homology in the junction. The consensus cleavage sequence is 5'-(A/T)TT(C/G)-3'. Cleavage occurs on the 3'-side of the TT dinucleotide at the point of strand exchange. HJ branch migration catalyzed by RuvA-RuvB allows RuvC to scan DNA until it finds its consensus sequence, where it cleaves and resolves the cruciform DNA. This Burkholderia thailandensis (strain ATCC 700388 / DSM 13276 / CCUG 48851 / CIP 106301 / E264) protein is Crossover junction endodeoxyribonuclease RuvC.